Here is a 127-residue protein sequence, read N- to C-terminus: Cytochrome c2 (127 aa).

An N-terminal signal peptide occupies residues 1–20 (MRKLVFGLFVLAASVAPAAA). Pyrrolidone carboxylic acid is present on Q21. The heme c site is built by C33, C36, H37, and M99.

Belongs to the cytochrome c family. Post-translationally, binds 1 heme c group covalently per subunit.

Its function is as follows. Cytochrome c2 is found mainly in purple, non-sulfur, photosynthetic bacteria where it functions as the electron donor to the oxidized bacteriochlorophyll in the photophosphorylation pathway. However, it may also have a role in the respiratory chain and is found in some non-photosynthetic bacteria. The protein is Cytochrome c2 (cycA) of Blastochloris viridis (Rhodopseudomonas viridis).